The following is a 918-amino-acid chain: Protein SEY1 homolog (918 aa).

Topologically, residues 1-701 (MESSNHLPNK…AGTSVSSWRN (701 aa)) are cytoplasmic. The GB1/RHD3-type G domain occupies 46 to 280 (GFKFNVVTIL…VPSDGFFVYS (235 aa)). 56–63 (GSQSSGKS) contacts GTP. The stretch at 554 to 626 (SLVLLLKATQ…DALTLLQVLK (73 aa)) forms a coiled coil. The chain crosses the membrane as a helical span at residues 702–722 (IPPVFWLVLLVLGWNELRAAF). Residues 723-725 (RVL) are Lumenal-facing. The chain crosses the membrane as a helical span at residues 726–746 (LKFYILIPLLIVSYFTFSYSA). At 747–918 (NKLLGPKANE…CGKAVHLAQW (172 aa)) the chain is on the cytoplasmic side.

Belongs to the TRAFAC class dynamin-like GTPase superfamily. GB1/RHD3 GTPase family. RHD3 subfamily.

It localises to the endoplasmic reticulum membrane. Functionally, probable GTP-binding protein that may be involved in cell development. This Theileria annulata protein is Protein SEY1 homolog.